Reading from the N-terminus, the 326-residue chain is Transcription factor MYB16 (326 aa).

HTH myb-type domains lie at 9–61 (KLGL…TNYL) and 62–116 (RPDI…KKRL). DNA-binding regions (H-T-H motif) lie at residues 37–61 (WRSLPEKAGLHRCGKSCRLRWTNYL) and 89–112 (WSAIATHLPKRTDNEIKNYWNTHL). 2 disordered regions span residues 197 to 217 (NWTTKPHEDQQQLESPTSTVS) and 280 to 299 (DRSFSGDKNETAGESSGGDC). The segment covering 208–217 (QLESPTSTVS) has biased composition (polar residues). Over residues 280–290 (DRSFSGDKNET) the composition is skewed to basic and acidic residues.

In terms of tissue distribution, expressed in trichomes, epidermis and mesophyll cells of young leaves, stems, petals, sepals, carpels and stamens.

Its subcellular location is the nucleus. In terms of biological role, involved in the control of epidermal cell morphogenesis in petals. Promotes unidirectional cell expansion once outgrowth has been initiated. Coordinately with WIN1/SHN1, participates in the regulation of cuticle biosynthesis and wax accumulation in reproductive organs and trichomes. Functions in cuticle nanoridge formation in petals and stamens, and in morphogenesis of petal conical cells and trichomes. Functions as a major regulator of cuticle formation in vegetative organs by regulating the cuticle biosynthesis genes CYP86A8/LCR and CER1. This Arabidopsis thaliana (Mouse-ear cress) protein is Transcription factor MYB16.